A 336-amino-acid chain; its full sequence is Transmembrane protease serine 12 (336 aa).

The N-terminal stretch at 1-18 (MASWALSAALLCLGGAFA) is a signal peptide. Topologically, residues 19–312 (YSELHSLSLR…HYLSQGNINR (294 aa)) are extracellular. The region spanning 66-306 (IIGGSQADTG…FQEWMTHYLS (241 aa)) is the Peptidase S1 domain. An intrachain disulfide couples cysteine 95 to cysteine 111. Residues histidine 110 and aspartate 159 each act as charge relay system in the active site. 3 disulfides stabilise this stretch: cysteine 194–cysteine 262, cysteine 225–cysteine 241, and cysteine 252–cysteine 282. N-linked (GlcNAc...) asparagine glycans are attached at residues asparagine 207, asparagine 237, and asparagine 246. The Charge relay system role is filled by serine 256. A helical membrane pass occupies residues 313 to 333 (LFNMDIVLGQVLTALGSVILL). Residues 334–336 (GVT) lie on the Cytoplasmic side of the membrane.

This sequence belongs to the peptidase S1 family. Exclusively expressed in the testis, from spermatocytes to elongated spermatids (at protein level).

It localises to the cell membrane. It is found in the cytoplasmic vesicle. The protein localises to the secretory vesicle. Its subcellular location is the acrosome. Its function is as follows. Required for male fertility. Plays a critical role in sperm capacitation and acrosome reactions during fertilization, and also plays a role in the regulation of proteins involved in spermatogenesis. Regulates protein pathways that promote chromosomal synapsis formation, double-strand break repair, formation of the inner mitochondrial membrane cristae and apoptosis in developing sperm. Required for normal sperm motility and binding to the zona pellucida, potentially via a role in ADAM3 protein maturation. The chain is Transmembrane protease serine 12 from Mus musculus (Mouse).